The following is a 240-amino-acid chain: uncharacterized protein (240 aa).

2 helical membrane passes run A16–P36 and F67–M87.

The protein resides in the cell membrane. This is an uncharacterized protein from Bacillus subtilis (strain 168).